Reading from the N-terminus, the 271-residue chain is Formamidopyrimidine-DNA glycosylase (271 aa).

Residue Pro-2 is the Schiff-base intermediate with DNA of the active site. The active-site Proton donor is the Glu-3. Lys-57 functions as the Proton donor; for beta-elimination activity in the catalytic mechanism. 3 residues coordinate DNA: His-90, Arg-109, and Lys-151. The FPG-type zinc finger occupies 236 to 270 (HVYGRGGDTCTHCGQLLSEIRLGQRATVFCSICQQ). Catalysis depends on Arg-260, which acts as the Proton donor; for delta-elimination activity.

Belongs to the FPG family. Monomer. Zn(2+) is required as a cofactor.

It catalyses the reaction Hydrolysis of DNA containing ring-opened 7-methylguanine residues, releasing 2,6-diamino-4-hydroxy-5-(N-methyl)formamidopyrimidine.. It carries out the reaction 2'-deoxyribonucleotide-(2'-deoxyribose 5'-phosphate)-2'-deoxyribonucleotide-DNA = a 3'-end 2'-deoxyribonucleotide-(2,3-dehydro-2,3-deoxyribose 5'-phosphate)-DNA + a 5'-end 5'-phospho-2'-deoxyribonucleoside-DNA + H(+). Involved in base excision repair of DNA damaged by oxidation or by mutagenic agents. Acts as a DNA glycosylase that recognizes and removes damaged bases. Has a preference for oxidized purines, such as 7,8-dihydro-8-oxoguanine (8-oxoG). Has AP (apurinic/apyrimidinic) lyase activity and introduces nicks in the DNA strand. Cleaves the DNA backbone by beta-delta elimination to generate a single-strand break at the site of the removed base with both 3'- and 5'-phosphates. The chain is Formamidopyrimidine-DNA glycosylase from Shewanella piezotolerans (strain WP3 / JCM 13877).